Reading from the N-terminus, the 272-residue chain is HMP-PP phosphatase (272 aa).

The Nucleophile role is filled by aspartate 8. Residues aspartate 8, aspartate 10, and aspartate 212 each coordinate Mg(2+).

This sequence belongs to the HAD-like hydrolase superfamily. Cof family. Mg(2+) serves as cofactor.

The enzyme catalyses 4-amino-2-methyl-5-(diphosphooxymethyl)pyrimidine + H2O = 4-amino-2-methyl-5-(phosphooxymethyl)pyrimidine + phosphate + H(+). Its function is as follows. Catalyzes the hydrolysis of 4-amino-2-methyl-5-hydroxymethylpyrimidine pyrophosphate (HMP-PP) to 4-amino-2-methyl-5-hydroxymethylpyrimidine phosphate (HMP-P). This Salmonella arizonae (strain ATCC BAA-731 / CDC346-86 / RSK2980) protein is HMP-PP phosphatase.